The chain runs to 444 residues: Enolase 2 (444 aa).

Positions 165 and 174 each coordinate substrate. Catalysis depends on E217, which acts as the Proton donor. Residues D252, E303, and D330 each contribute to the Mg(2+) site. Substrate contacts are provided by E303 and D330. Residue K355 is the Proton acceptor of the active site. Substrate-binding positions include 382-385 and K406; that span reads SHRS.

The protein belongs to the enolase family. As to quaternary structure, homodimer. It depends on Mg(2+) as a cofactor.

Its subcellular location is the cytoplasm. The catalysed reaction is (2R)-2-phosphoglycerate = phosphoenolpyruvate + H2O. It functions in the pathway carbohydrate degradation; glycolysis; pyruvate from D-glyceraldehyde 3-phosphate: step 4/5. In Toxoplasma gondii, this protein is Enolase 2 (ENO2).